A 347-amino-acid chain; its full sequence is FK506-binding protein-like (347 aa).

The tract at residues 1 to 24 is disordered; it reads METSPISPMNEKNTAQPQQREENA. Thr-3 is subject to Phosphothreonine. TPR repeat units lie at residues 208 to 241, 250 to 283, and 284 to 317; these read AKEEHRRGTELFRAGNPQGAARCYGRALRLLLTL, TTLYANLAACQLLLGHPQLAAQSCDRVLEREPGH, and LKALYRRGVARAALGDLEKATADFKKVLAVDPKN.

Forms a ternary complex with CDKN1A/p21 and HSP90AB1/Hsp90.

Its function is as follows. May be involved in response to X-ray. Regulates p21 protein stability by binding to Hsp90 and p21. The sequence is that of FK506-binding protein-like (Fkbpl) from Mus musculus (Mouse).